The sequence spans 37 residues: MTILNNLPSIFVPLVGLVFPAIAMASLSLHVQKNKIF.

A helical transmembrane segment spans residues 7-27; it reads LPSIFVPLVGLVFPAIAMASL.

This sequence belongs to the PsaI family.

The protein localises to the plastid. The protein resides in the chloroplast thylakoid membrane. Functionally, may help in the organization of the PsaL subunit. The polypeptide is Photosystem I reaction center subunit VIII (Populus alba (White poplar)).